A 398-amino-acid chain; its full sequence is 1-deoxy-D-xylulose 5-phosphate reductoisomerase (398 aa).

NADPH is bound by residues Thr11, Gly12, Ser13, Ile14, Arg38, Asn39, and Asn125. Lys126 contacts 1-deoxy-D-xylulose 5-phosphate. Glu127 is a binding site for NADPH. Residue Asp151 coordinates Mn(2+). 4 residues coordinate 1-deoxy-D-xylulose 5-phosphate: Ser152, Glu153, Ser179, and His202. Glu153 contributes to the Mn(2+) binding site. Gly208 contributes to the NADPH binding site. 1-deoxy-D-xylulose 5-phosphate is bound by residues Ser215, Asn220, Lys221, and Glu224. Residue Glu224 coordinates Mn(2+).

This sequence belongs to the DXR family. Mg(2+) is required as a cofactor. Requires Mn(2+) as cofactor.

It carries out the reaction 2-C-methyl-D-erythritol 4-phosphate + NADP(+) = 1-deoxy-D-xylulose 5-phosphate + NADPH + H(+). Its pathway is isoprenoid biosynthesis; isopentenyl diphosphate biosynthesis via DXP pathway; isopentenyl diphosphate from 1-deoxy-D-xylulose 5-phosphate: step 1/6. Its function is as follows. Catalyzes the NADPH-dependent rearrangement and reduction of 1-deoxy-D-xylulose-5-phosphate (DXP) to 2-C-methyl-D-erythritol 4-phosphate (MEP). The polypeptide is 1-deoxy-D-xylulose 5-phosphate reductoisomerase (Burkholderia vietnamiensis (strain G4 / LMG 22486) (Burkholderia cepacia (strain R1808))).